Here is a 238-residue protein sequence, read N- to C-terminus: uncharacterized protein (238 aa).

This is an uncharacterized protein from Haemophilus influenzae (strain ATCC 51907 / DSM 11121 / KW20 / Rd).